Consider the following 100-residue polypeptide: Aspartyl/glutamyl-tRNA(Asn/Gln) amidotransferase subunit C (100 aa).

It belongs to the GatC family. In terms of assembly, heterotrimer of A, B and C subunits.

The enzyme catalyses L-glutamyl-tRNA(Gln) + L-glutamine + ATP + H2O = L-glutaminyl-tRNA(Gln) + L-glutamate + ADP + phosphate + H(+). The catalysed reaction is L-aspartyl-tRNA(Asn) + L-glutamine + ATP + H2O = L-asparaginyl-tRNA(Asn) + L-glutamate + ADP + phosphate + 2 H(+). Functionally, allows the formation of correctly charged Asn-tRNA(Asn) or Gln-tRNA(Gln) through the transamidation of misacylated Asp-tRNA(Asn) or Glu-tRNA(Gln) in organisms which lack either or both of asparaginyl-tRNA or glutaminyl-tRNA synthetases. The reaction takes place in the presence of glutamine and ATP through an activated phospho-Asp-tRNA(Asn) or phospho-Glu-tRNA(Gln). The polypeptide is Aspartyl/glutamyl-tRNA(Asn/Gln) amidotransferase subunit C (Janthinobacterium sp. (strain Marseille) (Minibacterium massiliensis)).